A 300-amino-acid polypeptide reads, in one-letter code: Ribosomal protein L11 methyltransferase (300 aa).

S-adenosyl-L-methionine contacts are provided by threonine 152, glycine 173, aspartate 195, and asparagine 234.

The protein belongs to the methyltransferase superfamily. PrmA family.

The protein localises to the cytoplasm. It catalyses the reaction L-lysyl-[protein] + 3 S-adenosyl-L-methionine = N(6),N(6),N(6)-trimethyl-L-lysyl-[protein] + 3 S-adenosyl-L-homocysteine + 3 H(+). Methylates ribosomal protein L11. This is Ribosomal protein L11 methyltransferase from Burkholderia mallei (strain NCTC 10247).